We begin with the raw amino-acid sequence, 533 residues long: Laccase-2 (533 aa).

The first 23 residues, 1-23 (MFPGARILATLTLALHLLHGAHA), serve as a signal peptide directing secretion. 3 Plastocyanin-like domains span residues 25 to 171 (IGPA…LSLY), 173 to 336 (IDNA…LETN), and 382 to 501 (TAPV…FAED). Cu cation is bound by residues H98, H100, H143, and H145. 2 disulfide bridges follow: C119–C516 and C151–C238. Cu cation-binding residues include H427, H430, and H432. N467 carries an N-linked (GlcNAc...) (high mannose) asparagine glycan. 4 residues coordinate Cu cation: H483, C484, H485, and H489.

This sequence belongs to the multicopper oxidase family. Cu cation serves as cofactor. Post-translationally, N-glycosylated at Asn-467; contains a high-mannose glycan with a varying number of mannose residues.

It localises to the secreted. The catalysed reaction is 4 hydroquinone + O2 = 4 benzosemiquinone + 2 H2O. Lignin degradation and detoxification of lignin-derived products. This is Laccase-2 (POX2) from Pleurotus ostreatus (Oyster mushroom).